The following is a 722-amino-acid chain: A-type ATP synthase subunit I (722 aa).

The segment covering 309 to 321 (DYKPTGHDQHVPA) has biased composition (basic and acidic residues). Positions 309–352 (DYKPTGHDQHVPADDGADAATDGGTTASFDETDSPPVIQDNPGP) are disordered. Residues 326 to 335 (DAATDGGTTA) show a composition bias toward low complexity. 8 consecutive transmembrane segments (helical) span residues 384-404 (FYGF…LGFW), 419-439 (GVAM…GEVF), 474-494 (LAAS…FGFV), 505-525 (AALE…WLFS), 554-574 (LAAA…AGFL), 590-610 (IAAV…LVFG), 639-659 (FMLF…MHMG), and 662-682 (GILI…ALGV).

Belongs to the V-ATPase 116 kDa subunit family. Has multiple subunits with at least A(3), B(3), C, D, E, F, H, I and proteolipid K(x).

It localises to the cell membrane. Component of the A-type ATP synthase that produces ATP from ADP in the presence of a proton gradient across the membrane. This is A-type ATP synthase subunit I from Halobacterium salinarum (strain ATCC 700922 / JCM 11081 / NRC-1) (Halobacterium halobium).